Consider the following 38-residue polypeptide: DNA binding protein VP8 (38 aa).

The span at 1-16 (MKRKPMSRKASQKTFK) shows a compositional bias: basic residues. The disordered stretch occupies residues 1-38 (MKRKPMSRKASQKTFKKNTGVQRMNHLNPRAMRGGIRL).

This sequence belongs to the microviridae J protein family.

It localises to the virion. The protein localises to the host cytoplasm. Mediates ssDNA packaging into virion, it locates to the internal surface of the capsid, thereby displacing the internal scaffolding protein VP3 during virion formation. Additionally, protein VP8 plays a role in viral attachment to the host cell. This chain is DNA binding protein VP8, found in Bdellovibrio phage phiMH2K (Bacteriophage phiMH2K).